Reading from the N-terminus, the 658-residue chain is MELKNLFPIFWFVLVGFAVVSAQECGKTGFFVPQSRYETNRGLLLSSLPSNVSARGGFYNSSIGQGPDRVYALGMCIEGAEPDVCSDCIEYASNLLLDTCLNQTEGLAWPEKRILCMVRYSNSSFFGSLKAEPHFYIHNVDDITSNLTEFDQVWEELARRMIASTTSPSSKRKYYAADVAALTAFQIIYALMQCTPDLSLEDCHICLRQSVGDYETCCNGKQGGIVYRASCVFRWELFPFSEAFSRISLAPPPQSPAFPTLPAVTNTATKKGSITISIGIVWAIIIPTVIVVFLVLLALGFVVYRRRKSYQGSSTDITITHSLQFDFKAIEDATNKFSESNIIGRGGFGEVFMGVLNGTEVAIKRLSKASRQGAREFKNEVVVVAKLHHRNLVKLLGFCLEGEEKILVYEFVPNKSLDYFLFDPTKQGQLDWTKRYNIIRGITRGILYLHQDSRLTIIHRDLKASNILLDADMNPKIADFGMARIFGIDQSGANTKKIAGTRGYMPPEYVRQGQFSTRSDVYSFGVLVLEIICGRNNRFIHQSDTTVENLVTYAWRLWRNDSPLELVDPTISENCETEEVTRCIHIALLCVQHNPTDRPSLSTINMMLINNSYVLPDPQQPGFFFPIISNQERDGLDSMNRSNPQTINDVTITDFEPR.

The N-terminal stretch at 1-22 is a signal peptide; that stretch reads MELKNLFPIFWFVLVGFAVVSA. Gnk2-homologous domains follow at residues 23 to 125 and 131 to 240; these read QECG…NSSF and AEPH…LFPF. The Extracellular segment spans residues 23 to 277; sequence QECGKTGFFV…ATKKGSITIS (255 aa). 5 N-linked (GlcNAc...) asparagine glycosylation sites follow: N51, N60, N102, N122, and N146. The chain crosses the membrane as a helical span at residues 278–298; that stretch reads IGIVWAIIIPTVIVVFLVLLA. Over 299-658 the chain is Cytoplasmic; it reads LGFVVYRRRK…DVTITDFEPR (360 aa). One can recognise a Protein kinase domain in the interval 337-614; that stretch reads FSESNIIGRG…NMMLINNSYV (278 aa). Residues 343 to 351 and K364 contribute to the ATP site; that span reads IGRGGFGEV. The residue at position 409 (Y409) is a Phosphotyrosine. The Proton acceptor role is filled by D461. S465 is subject to Phosphoserine. Phosphothreonine is present on T501. A Phosphotyrosine modification is found at Y509.

It belongs to the protein kinase superfamily. Ser/Thr protein kinase family. CRK subfamily.

The protein localises to the membrane. The catalysed reaction is L-seryl-[protein] + ATP = O-phospho-L-seryl-[protein] + ADP + H(+). It carries out the reaction L-threonyl-[protein] + ATP = O-phospho-L-threonyl-[protein] + ADP + H(+). The chain is Cysteine-rich receptor-like protein kinase 14 (CRK14) from Arabidopsis thaliana (Mouse-ear cress).